Here is a 227-residue protein sequence, read N- to C-terminus: UPF0758 protein lpg2489 (227 aa).

The MPN domain occupies 102–225 (RLSNTQQTYA…YSIFAENKWV (124 aa)). Zn(2+) contacts are provided by His173, His175, and Asp186. A JAMM motif motif is present at residues 173–186 (HNHPSGLSDASQQD).

The protein belongs to the UPF0758 family.

The sequence is that of UPF0758 protein lpg2489 from Legionella pneumophila subsp. pneumophila (strain Philadelphia 1 / ATCC 33152 / DSM 7513).